The sequence spans 611 residues: Nuclear cap-binding protein subunit 3 (611 aa).

The interval 1 to 44 (MAAVRGLRVSVKAGGGAEPEPMEVEEGEVEAAADRASPREVVSG) is disordered. A compositionally biased stretch (acidic residues) spans 20–31 (EPMEVEEGEVEA). An RNA recognition motif (RRM) domain region spans residues 108–169 (ETLYVYGVDD…LSSMPTNEKG (62 aa)). Residues 137–140 (WLDD) carry the WLDD motif; essential for 7-methylguanosine-containing mRNA cap binding motif. Disordered regions lie at residues 159–230 (NLSS…PDTL), 338–360 (EEPIEEEEEEEEEEEDMDEDDRV), 373–393 (REREGARRSAASNSDSDEMDY), 423–568 (KTIR…DSVL), and 583–611 (RQKKSRLDNLPSLQIEISRESSSGSDTDS). A compositionally biased stretch (basic and acidic residues) spans 168-179 (KGQRKKDGEHSS). Composition is skewed to acidic residues over residues 196–218 (DETEEGEVEEDNPSEAEDEDETE) and 339–358 (EPIEEEEEEEEEEEDMDEDD). Residues 423–439 (KTIRNSMRSDSVGNSVK) show a composition bias toward polar residues. Over residues 446-463 (SHAEKPADVRLILEEKRQ) the composition is skewed to basic and acidic residues. Positions 464-475 (STASRQQSSSGK) are enriched in low complexity. Composition is skewed to basic and acidic residues over residues 501–511 (SRREPLSDVHS) and 544–556 (PKDKERPSEKSEK). Positions 602-611 (ESSSGSDTDS) are enriched in low complexity.

It belongs to the NCBP3 family. Component of an alternative cap-binding complex (CBC) composed of NCBP1/CBP80 and NCBP3.

It is found in the nucleus. The protein resides in the cytoplasm. In terms of biological role, associates with NCBP1/CBP80 to form an alternative cap-binding complex (CBC) which plays a key role in mRNA export. NCBP3 serves as adapter protein linking the capped RNAs (m7GpppG-capped RNA) to NCBP1/CBP80. Unlike the conventional CBC with NCBP2 which binds both small nuclear RNA (snRNA) and messenger (mRNA) and is involved in their export from the nucleus, the alternative CBC with NCBP3 does not bind snRNA and associates only with mRNA thereby playing a role in only mRNA export. The chain is Nuclear cap-binding protein subunit 3 from Xenopus tropicalis (Western clawed frog).